We begin with the raw amino-acid sequence, 700 residues long: Long chain acyl-CoA synthetase 7, peroxisomal (700 aa).

Residues 1–29 (MEFASPEQRRLETIRSHIDTSPTNDQSSS) form a disordered region. The segment covering 7 to 18 (EQRRLETIRSHI) has biased composition (basic and acidic residues). Positions 10 to 18 (RLETIRSHI) match the Microbody targeting signal motif. Polar residues predominate over residues 19–29 (DTSPTNDQSSS). 266–277 (ICYTSGTTGTPK) provides a ligand contact to ATP. The interval 526–550 (DGWLHTGDIGLWLPGGRLKIIDRKK) is fatty acid-binding. The Microbody targeting signal signature appears at 698–700 (SKL).

This sequence belongs to the ATP-dependent AMP-binding enzyme family. Interacts with PEX5. The cofactor is Mg(2+). Expressed in roots, stems, leaves flowers and germinating seedling. Preferentially expressed in seeds.

The protein resides in the peroxisome. The enzyme catalyses a long-chain fatty acid + ATP + CoA = a long-chain fatty acyl-CoA + AMP + diphosphate. It carries out the reaction decanoate + ATP + CoA = decanoyl-CoA + AMP + diphosphate. It catalyses the reaction dodecanoate + ATP + CoA = dodecanoyl-CoA + AMP + diphosphate. The catalysed reaction is tetradecanoate + ATP + CoA = tetradecanoyl-CoA + AMP + diphosphate. The enzyme catalyses hexadecanoate + ATP + CoA = hexadecanoyl-CoA + AMP + diphosphate. It carries out the reaction (9Z)-octadecenoate + ATP + CoA = (9Z)-octadecenoyl-CoA + AMP + diphosphate. It catalyses the reaction (9Z,12Z)-octadecadienoate + ATP + CoA = (9Z,12Z)-octadecadienoyl-CoA + AMP + diphosphate. The catalysed reaction is (9Z,12Z,15Z)-octadecatrienoate + ATP + CoA = (9Z,12Z,15Z)-octadecatrienoyl-CoA + AMP + diphosphate. It functions in the pathway lipid metabolism; fatty acid metabolism. In terms of biological role, activation of long-chain fatty acids for both synthesis of cellular lipids, and degradation via beta-oxidation. Preferentially uses palmitate, palmitoleate, oleate, linoleate and eicosenoate as substrates. Can use myristate and linolenate as substrates. Functions redundantly with LACS6 in lipid mobilization for beta-oxidation during seed germination, which is essential for postgerminative growth and seedling establishment. The sequence is that of Long chain acyl-CoA synthetase 7, peroxisomal from Arabidopsis thaliana (Mouse-ear cress).